Here is an 82-residue protein sequence, read N- to C-terminus: Small ribosomal subunit protein eS27 (82 aa).

Residues Cys37, Cys40, Cys56, and Cys59 each contribute to the Zn(2+) site.

It belongs to the eukaryotic ribosomal protein eS27 family. In terms of assembly, component of the small ribosomal subunit. Mature ribosomes consist of a small (40S) and a large (60S) subunit. The 40S subunit contains about 32 different proteins and 1 molecule of RNA (18S). The 60S subunit contains 45 different proteins and 3 molecules of RNA (25S, 5.8S and 5S). Requires Zn(2+) as cofactor.

It localises to the cytoplasm. Component of the ribosome, a large ribonucleoprotein complex responsible for the synthesis of proteins in the cell. The small ribosomal subunit (SSU) binds messenger RNAs (mRNAs) and translates the encoded message by selecting cognate aminoacyl-transfer RNA (tRNA) molecules. The large subunit (LSU) contains the ribosomal catalytic site termed the peptidyl transferase center (PTC), which catalyzes the formation of peptide bonds, thereby polymerizing the amino acids delivered by tRNAs into a polypeptide chain. The nascent polypeptides leave the ribosome through a tunnel in the LSU and interact with protein factors that function in enzymatic processing, targeting, and the membrane insertion of nascent chains at the exit of the ribosomal tunnel. This is Small ribosomal subunit protein eS27 (RPS27) from Candida albicans (strain SC5314 / ATCC MYA-2876) (Yeast).